A 228-amino-acid chain; its full sequence is General odorant-binding protein 71 (228 aa).

The N-terminal stretch at Met1–Gly20 is a signal peptide. The tract at residues Thr50–Thr131 is disordered. A compositionally biased stretch (basic and acidic residues) spans Gly55–Arg72. Residues Gly83–Ser99 show a composition bias toward low complexity. Over residues Ala111 to Ser120 the composition is skewed to gly residues. Positions Gly121–Thr131 are enriched in low complexity. 2 disulfide bridges follow: Cys138/Cys199 and Cys185/Cys208.

The protein belongs to the PBP/GOBP family.

It localises to the secreted. Its function is as follows. Present in the aqueous fluid surrounding olfactory sensory dendrites and are thought to aid in the capture and transport of hydrophobic odorants into and through this fluid. The sequence is that of General odorant-binding protein 71 (Obp71) from Anopheles gambiae (African malaria mosquito).